The following is a 402-amino-acid chain: S-adenosylmethionine synthase (402 aa).

Histidine 16 lines the ATP pocket. Mg(2+) is bound at residue aspartate 18. Glutamate 44 contributes to the K(+) binding site. L-methionine-binding residues include glutamate 57 and glutamine 109. The flexible loop stretch occupies residues 109–119 (QSAHIAQGVDA). ATP-binding positions include 174–176 (DTK), aspartate 252, 258–259 (RK), alanine 275, and lysine 279. An L-methionine-binding site is contributed by aspartate 252. Lysine 283 is an L-methionine binding site.

It belongs to the AdoMet synthase family. Homotetramer; dimer of dimers. It depends on Mg(2+) as a cofactor. Requires K(+) as cofactor.

It localises to the cytoplasm. The catalysed reaction is L-methionine + ATP + H2O = S-adenosyl-L-methionine + phosphate + diphosphate. Its pathway is amino-acid biosynthesis; S-adenosyl-L-methionine biosynthesis; S-adenosyl-L-methionine from L-methionine: step 1/1. In terms of biological role, catalyzes the formation of S-adenosylmethionine (AdoMet) from methionine and ATP. The overall synthetic reaction is composed of two sequential steps, AdoMet formation and the subsequent tripolyphosphate hydrolysis which occurs prior to release of AdoMet from the enzyme. The sequence is that of S-adenosylmethionine synthase from Rhizorhabdus wittichii (strain DSM 6014 / CCUG 31198 / JCM 15750 / NBRC 105917 / EY 4224 / RW1) (Sphingomonas wittichii).